The chain runs to 301 residues: D-alanine--D-alanine ligase (301 aa).

Positions 101–296 constitute an ATP-grasp domain; the sequence is KLMWRAAGLA…YPTLVRRVLE (196 aa). 127-182 serves as a coordination point for ATP; the sequence is EEELGLPLFVKPAREGSSIGVTKVKERGALKAAYEEAARHDPLVIAEKGVMGGEYT. Mg(2+)-binding residues include Asp-250, Glu-263, and Asn-265.

It belongs to the D-alanine--D-alanine ligase family. Mg(2+) is required as a cofactor. Mn(2+) serves as cofactor.

Its subcellular location is the cytoplasm. The enzyme catalyses 2 D-alanine + ATP = D-alanyl-D-alanine + ADP + phosphate + H(+). It participates in cell wall biogenesis; peptidoglycan biosynthesis. Cell wall formation. This Dechloromonas aromatica (strain RCB) protein is D-alanine--D-alanine ligase.